The primary structure comprises 380 residues: Putative S-(hydroxymethyl)glutathione dehydrogenase 2 (380 aa).

Cys-50 is a Zn(2+) binding site. Residue His-51 coordinates NAD(+). Positions 72, 73, 102, 105, 108, 116, and 179 each coordinate Zn(2+). Residues 204 to 209 (GLGSVG), Asp-228, and 297 to 299 (IGV) contribute to the NAD(+) site.

Belongs to the zinc-containing alcohol dehydrogenase family. Class-III subfamily. Requires Zn(2+) as cofactor.

It carries out the reaction a primary alcohol + NAD(+) = an aldehyde + NADH + H(+). The catalysed reaction is a secondary alcohol + NAD(+) = a ketone + NADH + H(+). It catalyses the reaction S-(hydroxymethyl)glutathione + NADP(+) = S-formylglutathione + NADPH + H(+). The enzyme catalyses S-(hydroxymethyl)glutathione + NAD(+) = S-formylglutathione + NADH + H(+). It carries out the reaction S-nitrosoglutathione + NADH + H(+) = S-(hydroxysulfenamide)glutathione + NAD(+). Its function is as follows. Oxidizes long-chain alcohols and, in the presence of glutathione, is able to oxidize formaldehyde. Also acts as a S-nitroso-glutathione reductase by catalyzing the NADH-dependent reduction of S-nitrosoglutathione, thereby regulating protein S-nitrosylation. The sequence is that of Putative S-(hydroxymethyl)glutathione dehydrogenase 2 from Schizosaccharomyces pombe (strain 972 / ATCC 24843) (Fission yeast).